Reading from the N-terminus, the 352-residue chain is Bifunctional protein FolD 1, mitochondrial (352 aa).

A mitochondrion-targeting transit peptide spans 1-23 (MLMIARKALASAHTKAFRLATRD).

The protein belongs to the tetrahydrofolate dehydrogenase/cyclohydrolase family. As to quaternary structure, homodimer.

Its subcellular location is the mitochondrion. The enzyme catalyses (6R)-5,10-methylene-5,6,7,8-tetrahydrofolate + NADP(+) = (6R)-5,10-methenyltetrahydrofolate + NADPH. It catalyses the reaction (6R)-5,10-methenyltetrahydrofolate + H2O = (6R)-10-formyltetrahydrofolate + H(+). Its pathway is one-carbon metabolism; tetrahydrofolate interconversion. Functionally, catalyzes the oxidation of 5,10-methylenetetrahydrofolate to 5,10-methenyltetrahydrofolate and then the hydrolysis of 5,10-methenyltetrahydrofolate to 10-formyltetrahydrofolate. This is Bifunctional protein FolD 1, mitochondrial (FOLD1) from Arabidopsis thaliana (Mouse-ear cress).